The following is a 365-amino-acid chain: Putative DNA-directed RNA polymerase subunit alpha-like 3 (365 aa).

It belongs to the RNA polymerase alpha chain family. In plastids the minimal PEP RNA polymerase catalytic core is composed of four subunits: alpha, beta, beta', and beta''. When a (nuclear-encoded) sigma factor is associated with the core the holoenzyme is formed, which can initiate transcription.

The protein localises to the plastid. The protein resides in the chloroplast. It catalyses the reaction RNA(n) + a ribonucleoside 5'-triphosphate = RNA(n+1) + diphosphate. Functionally, DNA-dependent RNA polymerase catalyzes the transcription of DNA into RNA using the four ribonucleoside triphosphates as substrates. This is Putative DNA-directed RNA polymerase subunit alpha-like 3 (rpoAL3-A) from Pelargonium hortorum (Common geranium).